Here is a 394-residue protein sequence, read N- to C-terminus: Nuclear hormone receptor family member nhr-18 (394 aa).

Positions 8 to 83 (SGSCEVCGDK…VGMDTRRFQT (76 aa)) form a DNA-binding region, nuclear receptor. NR C4-type zinc fingers lie at residues 11–31 (CEVC…CRAC) and 48–71 (CPNG…LKKC). The region spanning 134 to 394 (MLQKPTNHVL…FSHPEMFEAT (261 aa)) is the NR LBD domain.

The protein belongs to the nuclear hormone receptor family.

The protein localises to the nucleus. In terms of biological role, orphan nuclear receptor. The sequence is that of Nuclear hormone receptor family member nhr-18 (nhr-18) from Caenorhabditis elegans.